The following is a 96-amino-acid chain: Bacterial microcompartment shell protein EutM (96 aa).

Residues 3 to 87 (ALGMIETRGL…PHGDLEEVFP (85 aa)) form the BMC domain.

This sequence belongs to the bacterial microcompartments protein family. Homohexamer with a central pore of up to 8.6 Angstroms diameter. The hexamers pack into a two-dimensional array. Interacts with EutQ; a probably cytoplasm-facing helix (Val-49 to Gln-64) interacts with N-terminus of EutQ.

Its subcellular location is the bacterial microcompartment. The protein operates within amine and polyamine degradation; ethanolamine degradation. In terms of biological role, probably a major component of the bacterial microcompartment (BMC) shell dedicated to ethanolamine degradation. Each homohexamer has a central pore with an opening of up to 8.6 Angstroms. A positively-charged funnel leads to the pore from each side of the hexamer. The pore probably allows metabolite passage into and out of the BMC. Expression of eutK, eutL, eutM, eutN, eutS (eutSMNLK) in E.coli leads to formation of a single BMC. Expression alone leads to thick filaments that interfere with cell separation. Coexpression of eutQ with eutSMNLK permits E.coli to make cells with more than one mobile BMC, as is usual in vivo. May play a role in BMC shell biogenesis. Can replace homolog pduA in the pdu operon, cells grow better than wild-type on 1,2-propanediol and vitamin B12. Protein is incorporated into the pdu BMC microcompartment. Its function is as follows. The ethanolamine (EA) catabolic bacterial microcompartment (BMC) probably concentrates low levels of ethanolamine catabolic enzymes, concentrates volatile reaction intermediates, keeps the level of toxic acetaldehyde low, generates enough acetyl-CoA to support cell growth, and maintains a pool of free coenzyme A (CoA) and NAD. Deletion of BMC genes (eutK, eutL, eutM) restores growth of eutD deletions, suggesting there are dedicated pools of coenzyme A (CoA) and NAD in the BMC. Functionally, expression of the eut operon allows this bacteria to use ethanolamine as a carbon, nitrogen and energy source. It relies on cobalamin (vitamin B12) both as a cofactor for the ethanolamine ammonia-lyase (EAL) activity and to induce the operon. EA enhances bacterial survival in macrophages in a concentration-dependent manner, suggesting it is an important nutrient during infection. The chain is Bacterial microcompartment shell protein EutM from Salmonella typhimurium (strain LT2 / SGSC1412 / ATCC 700720).